Reading from the N-terminus, the 247-residue chain is 5-oxoprolinase subunit A (247 aa).

This sequence belongs to the LamB/PxpA family. As to quaternary structure, forms a complex composed of PxpA, PxpB and PxpC.

It carries out the reaction 5-oxo-L-proline + ATP + 2 H2O = L-glutamate + ADP + phosphate + H(+). Functionally, catalyzes the cleavage of 5-oxoproline to form L-glutamate coupled to the hydrolysis of ATP to ADP and inorganic phosphate. The protein is 5-oxoprolinase subunit A of Klebsiella pneumoniae subsp. pneumoniae (strain ATCC 700721 / MGH 78578).